A 360-amino-acid polypeptide reads, in one-letter code: UDP-N-acetylglucosamine--N-acetylmuramyl-(pentapeptide) pyrophosphoryl-undecaprenol N-acetylglucosamine transferase (360 aa).

Residues 12-14, Ser198, and Gln289 contribute to the UDP-N-acetyl-alpha-D-glucosamine site; that span reads TAG.

The protein belongs to the glycosyltransferase 28 family. MurG subfamily.

Its subcellular location is the cell membrane. The enzyme catalyses Mur2Ac(oyl-L-Ala-gamma-D-Glu-L-Lys-D-Ala-D-Ala)-di-trans,octa-cis-undecaprenyl diphosphate + UDP-N-acetyl-alpha-D-glucosamine = beta-D-GlcNAc-(1-&gt;4)-Mur2Ac(oyl-L-Ala-gamma-D-Glu-L-Lys-D-Ala-D-Ala)-di-trans,octa-cis-undecaprenyl diphosphate + UDP + H(+). It functions in the pathway cell wall biogenesis; peptidoglycan biosynthesis. Its function is as follows. Cell wall formation. Catalyzes the transfer of a GlcNAc subunit on undecaprenyl-pyrophosphoryl-MurNAc-pentapeptide (lipid intermediate I) to form undecaprenyl-pyrophosphoryl-MurNAc-(pentapeptide)GlcNAc (lipid intermediate II). This Streptococcus equi subsp. equi (strain 4047) protein is UDP-N-acetylglucosamine--N-acetylmuramyl-(pentapeptide) pyrophosphoryl-undecaprenol N-acetylglucosamine transferase.